Consider the following 892-residue polypeptide: Dystroglycan 1 (892 aa).

Positions 1–27 (MRMSAGLSLLLPLWGRTFLLLLSVAMA) are cleaved as a signal peptide. The Extracellular portion of the chain corresponds to 28-750 (QSHWPSEAGR…SSEDDVYLHT (723 aa)). The segment at 30–405 (HWPSEAGRDW…GQIRPTMTIP (376 aa)) is required for laminin recognition. The tract at residues 46–68 (SMHSVLSDLHEAVPTVVGIPDGI) is O-glycosylated at one site. An N-linked (GlcNAc...) asparagine glycan is attached at N138. Residues C179 and C261 are joined by a disulfide bond. Residues 313-482 (ATPTPVTAIG…PPTRIRTTTS (170 aa)) are mucin-like domain. T314, T316, and T376 each carry an O-linked (Man6P...) threonine glycan. Positions 378–497 (TLGPIQPTRV…GEPNQRPELK (120 aa)) are disordered. A compositionally biased stretch (low complexity) spans 410 to 444 (PTAVATPPTTTTKKPRVSTPKPATPSTDSSTTTTR). Residues 460–482 (TTKAPITRLETASPPTRIRTTTS) are O-glycosylated at seven sites with GalNAc. The 110-residue stretch at 600–709 (RAPARFKAKF…SSIAVTGSGS (110 aa)) folds into the Peptidase S72 domain. N638, N646, and N658 each carry an N-linked (GlcNAc...) asparagine glycan. A disulfide bond links C666 and C710. The interval 721–742 (PRRVPSEVPSTDVPDRDPEKSS) is disordered. Residues 733 to 742 (VPDRDPEKSS) are compositionally biased toward basic and acidic residues. The chain crosses the membrane as a helical span at residues 751–771 (VIPAVVVAAILLIAGIIAMIC). The Cytoplasmic segment spans residues 772–892 (YRKKRKGKLT…YRSPPPYVPP (121 aa)). The Nuclear localization signal motif lies at 773 to 779 (RKKRKGK). At T787 the chain carries Phosphothreonine. The required for interaction with CAV3 stretch occupies residues 816 to 892 (LQEEKAPLPP…YRSPPPYVPP (77 aa)). The interval 820–892 (KAPLPPPEYP…YRSPPPYVPP (73 aa)) is disordered. Residues 829–843 (PNQSVPETTPLNQDT) show a composition bias toward polar residues. The span at 856 to 867 (NAPPYQPPPPFT) shows a compositional bias: pro residues. The tract at residues 877–892 (PKNMTPYRSPPPYVPP) is required for binding DMD and UTRN. The short motif at 886 to 889 (PPPY) is the PPXY motif element. Residue Y889 is modified to Phosphotyrosine; by SRC.

Monomer. Heterodimer of alpha- and beta-dystroglycan subunits which are the central components of the dystrophin-glycoprotein complex. This complex then can form a dystrophin-associated glycoprotein complex (DGC) which is composed of three subcomplexes: a cytoplasmic complex comprised of DMD (or UTRN), DTNA and a number of syntrophins, such as SNTB1, SNTB2, SNTG1 and SNTG2, the transmembrane dystroglycan complex, and the sarcoglycan-sarcospan complex. Interacts (via the N-terminal of alphaDAG1) with LARGE1; the interaction enhances laminin binding. Interacts with SGCD. Interacts with AGR2 and AGR3. Interacts (betaDAG1) with DMD; the interaction is inhibited by phosphorylation on the PPXY motif. Interacts (betaDAG1, via its PPXY motif) with UTRN (via its WWW and ZZ domains); the interaction is inhibited by phosphorylation on the PPXY motif. Interacts (betaDAG1, via its phosphorylated PPXY motif) with the SH2 domain-containing proteins, FYN, CSK, NCK and SHC. Interacts (betaDAG1) with CAV3 (via a central WW-like domain); the interaction disrupts the binding of DMD. BetaDAG1 directly interacts with ANK3, but not with ANK2; this interaction does not interfere with DMD-binding and is required for retention at costameres. Identified in a dystroglycan complex that contains at least PRX, DRP2, UTRN, DMD and DAG1. Interacts with POMGNT1. BetaDAG1 interacts with CD93. O-glycosylated. POMGNT1 catalyzes the initial addition of N-acetylglucosamine, giving rise to the GlcNAc(beta1-2)Man(alpha1-)O-Ser/Thr moiety and thus providing the necessary basis for the addition of further carbohydrate moieties. Heavily O-glycosylated comprising of up to two thirds of its mass and the carbohydrate composition differs depending on tissue type. Mucin-type O-glycosylation is important for ligand binding activity. O-mannosylation is found in high abundance in both brain and muscle where the most abundant glycan is Sia-alpha-2-3-Gal-beta-1-4-Glc-NAc-beta-1-2-Man. In muscle, glycosylation on Thr-314, Thr-316 and Thr-376 by a phosphorylated O-mannosyl glycan with the structure 2-(N-acetylamido)-2-deoxygalactosyl-beta-1,3-2-(N-acetylamido)-2-deoxyglucosyl-beta-1,4-6-phosphomannose is mediated by like-acetylglucosaminyltransferase (LARGE1) protein amd is required for laminin binding. O-glycosylated in the N-terminal region with a core 1 or possibly core 8 glycan. The brain form displays a unique glycosylation pattern which is absent in other tissues; this form shows enhanced binding to laminin LAMA5 compared to the skeletal muscle form. In terms of processing, N-glycosylated. Post-translationally, autolytic cleavage produces the alpha and beta subunits. In cutaneous cells, as well as in certain pathological conditions, shedding of beta-dystroglycan can occur releasing a peptide of about 30 kDa. SRC-mediated phosphorylation of the PPXY motif of the beta subunit recruits SH2 domain-containing proteins, but inhibits binding to WWW domain-containing proteins, DMD and UTRN. This phosphorylation also inhibits nuclear entry.

The protein localises to the secreted. Its subcellular location is the extracellular space. It is found in the cell membrane. The protein resides in the cytoplasm. It localises to the cytoskeleton. The protein localises to the nucleus. Its subcellular location is the nucleoplasm. It is found in the sarcolemma. The protein resides in the postsynaptic cell membrane. Functionally, the dystroglycan complex is involved in a number of processes including laminin and basement membrane assembly, sarcolemmal stability, cell survival, peripheral nerve myelination, nodal structure, cell migration, and epithelial polarization. Extracellular peripheral glycoprotein that acts as a receptor for extracellular matrix proteins containing laminin-G domains. Receptor for laminin-2 (LAMA2) and agrin in peripheral nerve Schwann cells. Also acts as a receptor for laminin LAMA5. Its function is as follows. Transmembrane protein that plays important roles in connecting the extracellular matrix to the cytoskeleton. Acts as a cell adhesion receptor in both muscle and non-muscle tissues. Receptor for both DMD and UTRN and, through these interactions, scaffolds axin to the cytoskeleton. Also functions in cell adhesion-mediated signaling and implicated in cell polarity. The chain is Dystroglycan 1 from Canis lupus familiaris (Dog).